The sequence spans 258 residues: uncharacterized protein (258 aa).

The HTH deoR-type domain maps to 3–58 (VAERQQKIVEIVNMRSSIRVSELSDIFSVTEETIRRDLEKLEKEHKLSRSHGGAVS). Residues 20-39 (IRVSELSDIFSVTEETIRRD) constitute a DNA-binding region (H-T-H motif).

This is an uncharacterized protein from Bacillus subtilis (strain 168).